The sequence spans 442 residues: 5-methylthioadenosine/S-adenosylhomocysteine deaminase (442 aa).

Positions 70 and 72 each coordinate Zn(2+). The substrate site is built by Glu-99 and His-191. Residue His-218 participates in Zn(2+) binding. Substrate is bound by residues Glu-221 and Asp-306. A Zn(2+)-binding site is contributed by Asp-306.

The protein belongs to the metallo-dependent hydrolases superfamily. MTA/SAH deaminase family. The cofactor is Zn(2+).

It catalyses the reaction S-adenosyl-L-homocysteine + H2O + H(+) = S-inosyl-L-homocysteine + NH4(+). The enzyme catalyses S-methyl-5'-thioadenosine + H2O + H(+) = S-methyl-5'-thioinosine + NH4(+). Functionally, catalyzes the deamination of 5-methylthioadenosine and S-adenosyl-L-homocysteine into 5-methylthioinosine and S-inosyl-L-homocysteine, respectively. Is also able to deaminate adenosine. The protein is 5-methylthioadenosine/S-adenosylhomocysteine deaminase of Nitratidesulfovibrio vulgaris (strain DP4) (Desulfovibrio vulgaris).